The sequence spans 216 residues: Ras-related protein RABA1b (216 aa).

20 to 27 (GDSGVGKS) serves as a coordination point for GTP. The Effector region motif lies at 42-50 (SKSTIGVEF). Residues 68 to 72 (DTAGQ), 126 to 129 (NKSD), and 156 to 157 (SA) contribute to the GTP site. Residues C213 and C214 are each lipidated (S-geranylgeranyl cysteine).

Belongs to the small GTPase superfamily. Rab family.

The protein localises to the cell membrane. Functionally, intracellular vesicle trafficking and protein transport. The polypeptide is Ras-related protein RABA1b (RABA1B) (Arabidopsis thaliana (Mouse-ear cress)).